The chain runs to 208 residues: ATP synthase subunit b (208 aa).

Positions 1–27 (MVKAKKLVFKWSLLVFSFFTLSLFLVS) are cleaved as a signal peptide. The N-palmitoyl cysteine moiety is linked to residue Cys28. A lipid anchor (S-diacylglycerol cysteine) is attached at Cys28. A helical transmembrane segment spans residues 49–69 (WVFITHLLAFFILLTLMIFLF).

The protein belongs to the ATPase B chain family. In terms of assembly, F-type ATPases have 2 components, F(1) - the catalytic core - and F(0) - the membrane proton channel. F(1) has five subunits: alpha(3), beta(3), gamma(1), delta(1), epsilon(1). F(0) has three main subunits: a(1), b(2) and c(10-14). The alpha and beta chains form an alternating ring which encloses part of the gamma chain. F(1) is attached to F(0) by a central stalk formed by the gamma and epsilon chains, while a peripheral stalk is formed by the delta and b chains.

Its subcellular location is the cell membrane. Functionally, f(1)F(0) ATP synthase produces ATP from ADP in the presence of a proton or sodium gradient. F-type ATPases consist of two structural domains, F(1) containing the extramembraneous catalytic core and F(0) containing the membrane proton channel, linked together by a central stalk and a peripheral stalk. During catalysis, ATP synthesis in the catalytic domain of F(1) is coupled via a rotary mechanism of the central stalk subunits to proton translocation. In terms of biological role, component of the F(0) channel, it forms part of the peripheral stalk, linking F(1) to F(0). The sequence is that of ATP synthase subunit b from Mycoplasma genitalium (strain ATCC 33530 / DSM 19775 / NCTC 10195 / G37) (Mycoplasmoides genitalium).